The primary structure comprises 59 residues: Small EDRK-rich factor 2 (59 aa).

Composition is skewed to basic and acidic residues over residues 1-30 (MTRG…RDDG) and 50-59 (KANEKKEEPK). Positions 1–59 (MTRGNQRELARQKNMKKQSDSVKGKRRDDGLSAAARKQRDSEIMQQKQKKANEKKEEPK) are disordered.

The protein belongs to the SERF family.

Positive regulator of amyloid protein aggregation and proteotoxicity. Induces conformational changes in amyloid proteins, such as HTT, driving them into compact formations preceding the formation of aggregates. The polypeptide is Small EDRK-rich factor 2 (SERF2) (Plecturocebus moloch (Dusky titi monkey)).